The primary structure comprises 233 residues: Probable septum site-determining protein MinC (233 aa).

The disordered stretch occupies residues 104–124; the sequence is QKMATPEPAPAPAPVVDPNAP.

It belongs to the MinC family. In terms of assembly, interacts with MinD and FtsZ.

Cell division inhibitor that blocks the formation of polar Z ring septums. Rapidly oscillates between the poles of the cell to destabilize FtsZ filaments that have formed before they mature into polar Z rings. Prevents FtsZ polymerization. This Serratia proteamaculans (strain 568) protein is Probable septum site-determining protein MinC.